A 103-amino-acid polypeptide reads, in one-letter code: Small ribosomal subunit protein uS10 (103 aa).

It belongs to the universal ribosomal protein uS10 family. In terms of assembly, part of the 30S ribosomal subunit.

Functionally, involved in the binding of tRNA to the ribosomes. This chain is Small ribosomal subunit protein uS10, found in Aliivibrio fischeri (strain ATCC 700601 / ES114) (Vibrio fischeri).